The following is a 148-amino-acid chain: MKKSKLLISTIISLFVLTASSVNHAQEKDFDPEVAADAVLRSAGIDPDKSVANKAPASGFWTCHGIRMHMGVDMGSWTDLDTGELYTQIETGQIDEQDKDEKIKGTDYLYALTRNPAVIKYFIVDKSGKNLYIRDDVNIFKTYKCKRN.

The first 24 residues, 1–24, serve as a signal peptide directing secretion; that stretch reads MKKSKLLISTIISLFVLTASSVNH.

Probably allows the phage to grow in a different host or environment or alteration of the cell wall or membrane. The chain is D108-specific protein (ges) from Escherichia phage D108 (Bacteriophage D108).